Reading from the N-terminus, the 276-residue chain is Large ribosomal subunit protein uL2 (276 aa).

The disordered stretch occupies residues 223–276 (GAAMNPVDHPHGGGEGRAPRGRPPASPWGWQTKGLKTRKRRKPSSRFIIARRKK). A compositionally biased stretch (basic and acidic residues) spans 230–240 (DHPHGGGEGRA). The span at 257-276 (LKTRKRRKPSSRFIIARRKK) shows a compositional bias: basic residues.

This sequence belongs to the universal ribosomal protein uL2 family. As to quaternary structure, part of the 50S ribosomal subunit. Forms a bridge to the 30S subunit in the 70S ribosome.

In terms of biological role, one of the primary rRNA binding proteins. Required for association of the 30S and 50S subunits to form the 70S ribosome, for tRNA binding and peptide bond formation. It has been suggested to have peptidyltransferase activity; this is somewhat controversial. Makes several contacts with the 16S rRNA in the 70S ribosome. The polypeptide is Large ribosomal subunit protein uL2 (Thermus thermophilus (strain ATCC BAA-163 / DSM 7039 / HB27)).